The following is a 427-amino-acid chain: 5-hydroxybenzimidazole synthase BzaB (427 aa).

It belongs to the ThiC family. 5-hydroxybenzimidazole synthase subfamily. The cofactor is [4Fe-4S] cluster.

The enzyme catalyses 5-amino-1-(5-phospho-beta-D-ribosyl)imidazole + AH2 + S-adenosyl-L-methionine = 5-hydroxybenzimidazole + 5'-deoxyadenosine + formate + L-methionine + A + NH4(+) + phosphate + 2 H(+). Its pathway is cofactor biosynthesis; adenosylcobalamin biosynthesis. In terms of biological role, together with BzaA, catalyzes the conversion of aminoimidazole ribotide (AIR) to 5-hydroxybenzimidazole (5-HBI) in a radical S-adenosyl-L-methionine (SAM)-dependent reaction. Is thus involved in the anaerobic biosynthesis of dimethylbenzimidazole (DMB), the lower axial ligand of vitamin B12 (cobalamin). Requires BzaA for catalytic activity, as BzaB alone displays no activity. This is 5-hydroxybenzimidazole synthase BzaB from Eubacterium limosum.